Reading from the N-terminus, the 1333-residue chain is DNA-directed RNA polymerase subunit beta' (1333 aa).

Zn(2+)-binding residues include Cys60, Cys62, Cys75, and Cys78. Residues Asp535, Asp537, and Asp539 each contribute to the Mg(2+) site. Zn(2+) contacts are provided by Cys901, Cys983, Cys990, and Cys993.

This sequence belongs to the RNA polymerase beta' chain family. The RNAP catalytic core consists of 2 alpha, 1 beta, 1 beta' and 1 omega subunit. When a sigma factor is associated with the core the holoenzyme is formed, which can initiate transcription. The cofactor is Mg(2+). It depends on Zn(2+) as a cofactor.

The catalysed reaction is RNA(n) + a ribonucleoside 5'-triphosphate = RNA(n+1) + diphosphate. In terms of biological role, DNA-dependent RNA polymerase catalyzes the transcription of DNA into RNA using the four ribonucleoside triphosphates as substrates. In Corynebacterium glutamicum (strain R), this protein is DNA-directed RNA polymerase subunit beta'.